A 389-amino-acid chain; its full sequence is PqqA peptide cyclase (389 aa).

The Radical SAM core domain maps to 20–235 (VGLPLWLLAE…TNEYRARLEA (216 aa)). 3 residues coordinate [4Fe-4S] cluster: cysteine 34, cysteine 38, and cysteine 41.

Belongs to the radical SAM superfamily. PqqE family. Interacts with PqqD. The interaction is necessary for activity of PqqE. It depends on [4Fe-4S] cluster as a cofactor.

The catalysed reaction is [PQQ precursor protein] + S-adenosyl-L-methionine = E-Y cross-linked-[PQQ precursor protein] + 5'-deoxyadenosine + L-methionine + H(+). It participates in cofactor biosynthesis; pyrroloquinoline quinone biosynthesis. Catalyzes the cross-linking of a glutamate residue and a tyrosine residue in the PqqA protein as part of the biosynthesis of pyrroloquinoline quinone (PQQ). This Pseudomonas fluorescens (strain ATCC BAA-477 / NRRL B-23932 / Pf-5) protein is PqqA peptide cyclase.